Here is a 307-residue protein sequence, read N- to C-terminus: Homoserine kinase (307 aa).

91–101 (PLARGLGSSAA) contributes to the ATP binding site.

This sequence belongs to the GHMP kinase family. Homoserine kinase subfamily.

The protein localises to the cytoplasm. The enzyme catalyses L-homoserine + ATP = O-phospho-L-homoserine + ADP + H(+). It participates in amino-acid biosynthesis; L-threonine biosynthesis; L-threonine from L-aspartate: step 4/5. Catalyzes the ATP-dependent phosphorylation of L-homoserine to L-homoserine phosphate. This Deinococcus radiodurans (strain ATCC 13939 / DSM 20539 / JCM 16871 / CCUG 27074 / LMG 4051 / NBRC 15346 / NCIMB 9279 / VKM B-1422 / R1) protein is Homoserine kinase.